Here is a 153-residue protein sequence, read N- to C-terminus: Ribosome maturation factor RimP (153 aa).

This sequence belongs to the RimP family.

The protein resides in the cytoplasm. Its function is as follows. Required for maturation of 30S ribosomal subunits. This Coxiella burnetii (strain CbuK_Q154) (Coxiella burnetii (strain Q154)) protein is Ribosome maturation factor RimP.